Consider the following 363-residue polypeptide: Glyceraldehyde-3-phosphate dehydrogenase, muscle (363 aa).

Positions Met-1–Ser-176 are interaction with WARS. Lys-3 carries the N6,N6-dimethyllysine modification. Deamidated asparagine is present on Asn-7. Residues Arg-11–Ile-12 and Asp-33 each bind NAD(+). Tyr-70 is modified (phosphotyrosine). Lys-89 is modified (N6-acetyllysine). Asn-92 is modified (deamidated asparagine). N6,N6-dimethyllysine is present on Lys-94. At Asn-98 the chain carries Deamidated asparagine. Thr-103 is modified (phosphothreonine). The NAD(+) site is built by Arg-108 and Ser-150. Residues Ser-150 and Ser-176 each carry the phosphoserine modification. Deamidated asparagine is present on Asn-177. The residue at position 179 (Ser-179) is a Phosphoserine. Ser-179–Thr-181 serves as a coordination point for D-glyceraldehyde 3-phosphate. The Nucleophile role is filled by Cys-180. Cys-180 is modified (ADP-ribosylcysteine; by autocatalysis; in irreversibly inhibited form). Residue Cys-180 is modified to Cysteine persulfide. S-(2-succinyl)cysteine is present on Cys-180. An S-nitrosocysteine; in reversibly inhibited form modification is found at Cys-180. Thr-181 is subject to Phosphothreonine. Asn-183 is subject to Deamidated asparagine. A phosphothreonine mark is found at Thr-205, Thr-210, and Thr-212. Residue Thr-210 participates in D-glyceraldehyde 3-phosphate binding. Lys-214 participates in a covalent cross-link: Glycyl lysine isopeptide (Lys-Gly) (interchain with G-Cter in SUMO2). Lys-222 is modified (N6,N6-dimethyllysine; alternate). At Lys-222 the chain carries N6-acetyllysine; alternate. Lys-222 bears the N6-malonyllysine; alternate mark. Thr-239 bears the Phosphothreonine mark. Thr-239–Gly-240 is a D-glyceraldehyde 3-phosphate binding site. The residue at position 243 (Lys-243) is an N6,N6-dimethyllysine; alternate. Lys-243 carries the N6-malonyllysine; alternate modification. Lys-247 is modified (N6-acetyllysine). Asn-253 is subject to Deamidated asparagine. Lys-255 is modified (N6,N6-dimethyllysine; alternate). The residue at position 255 (Lys-255) is an N6-acetyllysine; alternate. Thr-257 is modified (phosphothreonine). A D-glyceraldehyde 3-phosphate-binding site is contributed by Arg-262. Position 265 is a phosphothreonine (Thr-265). Ser-269 carries the post-translational modification Phosphoserine. Residue Cys-275 is modified to S-(2-succinyl)cysteine. An S-nitrosocysteine modification is found at Cys-275. At Lys-282 the chain carries N6-acetyllysine. Lys-291 bears the N6,N6-dimethyllysine mark. Ser-340 is subject to Phosphoserine. Asn-344 is modified (deamidated asparagine). Asn-344 provides a ligand contact to NAD(+). Phosphoserine is present on Ser-361. Lys-362 carries the post-translational modification N6,N6-dimethyllysine.

It belongs to the glyceraldehyde-3-phosphate dehydrogenase family. Homotetramer. Interacts with TPPP; the interaction is direct. Interacts (when S-nitrosylated) with SIAH1; leading to nuclear translocation. Interacts with RILPL1/GOSPEL, leading to prevent the interaction between GAPDH and SIAH1 and prevent nuclear translocation. Interacts with CHP1; the interaction increases the binding of CHP1 with microtubules. Associates with microtubules. Interacts with EIF1AD, USP25, PRKCI and WARS1. Interacts with phosphorylated RPL13A; inhibited by oxidatively-modified low-densitity lipoprotein (LDL(ox)). Component of the GAIT complex. Interacts with FKBP6; leading to inhibit GAPDH catalytic activity. Interacts with TRAF2, promoting TRAF2 ubiquitination. Interacts with TRAF3, promoting TRAF3 ubiquitination. In terms of processing, ISGylated. S-nitrosylation of Cys-180 leads to interaction with SIAH1, followed by translocation to the nucleus S-nitrosylation of Cys-275 is induced by interferon-gamma and LDL(ox) implicating the iNOS-S100A8/9 transnitrosylase complex and seems to prevent interaction with phosphorylated RPL13A and to interfere with GAIT complex activity. Post-translationally, sulfhydration at Cys-180 increases catalytic activity.

The protein localises to the cytoplasm. The protein resides in the cytosol. It is found in the cytoskeleton. It localises to the nucleus. The catalysed reaction is D-glyceraldehyde 3-phosphate + phosphate + NAD(+) = (2R)-3-phospho-glyceroyl phosphate + NADH + H(+). It carries out the reaction S-nitroso-L-cysteinyl-[GAPDH] + L-cysteinyl-[protein] = L-cysteinyl-[GAPDH] + S-nitroso-L-cysteinyl-[protein]. It participates in carbohydrate degradation; glycolysis; pyruvate from D-glyceraldehyde 3-phosphate: step 1/5. With respect to regulation, glyceraldehyde-3-phosphate dehydrogenase activity is inhibited by fumarate, via the formation of S-(2-succinyl)cysteine residues. Has both glyceraldehyde-3-phosphate dehydrogenase and nitrosylase activities, thereby playing a role in glycolysis and nuclear functions, respectively. Glyceraldehyde-3-phosphate dehydrogenase is a key enzyme in glycolysis that catalyzes the first step of the pathway by converting D-glyceraldehyde 3-phosphate (G3P) into 3-phospho-D-glyceroyl phosphate. Modulates the organization and assembly of the cytoskeleton. Facilitates the CHP1-dependent microtubule and membrane associations through its ability to stimulate the binding of CHP1 to microtubules. Component of the GAIT (gamma interferon-activated inhibitor of translation) complex which mediates interferon-gamma-induced transcript-selective translation inhibition in inflammation processes. Upon interferon-gamma treatment assembles into the GAIT complex which binds to stem loop-containing GAIT elements in the 3'-UTR of diverse inflammatory mRNAs (such as ceruplasmin) and suppresses their translation. Also plays a role in innate immunity by promoting TNF-induced NF-kappa-B activation and type I interferon production, via interaction with TRAF2 and TRAF3, respectively. Participates in nuclear events including transcription, RNA transport, DNA replication and apoptosis. Nuclear functions are probably due to the nitrosylase activity that mediates cysteine S-nitrosylation of nuclear target proteins such as SIRT1, HDAC2 and PRKDC. The chain is Glyceraldehyde-3-phosphate dehydrogenase, muscle from Jaculus orientalis (Greater Egyptian jerboa).